The chain runs to 98 residues: NADH-ubiquinone oxidoreductase chain 4L (98 aa).

Helical transmembrane passes span 1 to 21, 28 to 48, and 59 to 79; these read MMSI…GVLI, STLL…ALLI, and APLI…ALLV.

This sequence belongs to the complex I subunit 4L family. In terms of assembly, core subunit of respiratory chain NADH dehydrogenase (Complex I) which is composed of 45 different subunits.

It is found in the mitochondrion inner membrane. The enzyme catalyses a ubiquinone + NADH + 5 H(+)(in) = a ubiquinol + NAD(+) + 4 H(+)(out). Core subunit of the mitochondrial membrane respiratory chain NADH dehydrogenase (Complex I) which catalyzes electron transfer from NADH through the respiratory chain, using ubiquinone as an electron acceptor. Part of the enzyme membrane arm which is embedded in the lipid bilayer and involved in proton translocation. The chain is NADH-ubiquinone oxidoreductase chain 4L (MT-ND4L) from Osphranter robustus (Wallaroo).